The chain runs to 246 residues: Probable transcriptional regulatory protein RD1_2018 (246 aa).

Belongs to the TACO1 family.

Its subcellular location is the cytoplasm. The chain is Probable transcriptional regulatory protein RD1_2018 from Roseobacter denitrificans (strain ATCC 33942 / OCh 114) (Erythrobacter sp. (strain OCh 114)).